The sequence spans 666 residues: Zinc finger MYM-type protein 5 (666 aa).

Glycyl lysine isopeptide (Lys-Gly) (interchain with G-Cter in SUMO2) cross-links involve residues Lys85, Lys88, Lys146, and Lys163. The tract at residues 87–106 (EKPQGNYSVIPPPSRDLASQ) is disordered. Residues 191-212 (SPDSWISQSASFPRNQKQPGVD) are disordered. Polar residues predominate over residues 194–208 (SWISQSASFPRNQKQ). Lys222 participates in a covalent cross-link: Glycyl lysine isopeptide (Lys-Gly) (interchain with G-Cter in SUMO2). 4 consecutive MYM-type zinc fingers follow at residues 262 to 296 (HLFC…KKAD), 308 to 348 (QEFC…RHEV), 355 to 390 (HKLC…KSTG), and 401 to 428 (KRFC…ASEN). Residues Lys440, Lys452, Lys459, and Lys549 each participate in a glycyl lysine isopeptide (Lys-Gly) (interchain with G-Cter in SUMO2) cross-link.

In terms of assembly, interacts (via N-terminal 120 amino acid region) with ETV5 (via C-terminal).

It is found in the nucleus. Functionally, functions as a transcriptional regulator. The polypeptide is Zinc finger MYM-type protein 5 (ZMYM5) (Macaca fascicularis (Crab-eating macaque)).